Here is a 341-residue protein sequence, read N- to C-terminus: tRNA N6-adenosine threonylcarbamoyltransferase (341 aa).

Fe cation contacts are provided by histidine 115 and histidine 119. Substrate is bound by residues 137-141 (AVSGG), aspartate 170, glycine 183, aspartate 187, and asparagine 276. Residue aspartate 306 coordinates Fe cation.

The protein belongs to the KAE1 / TsaD family. Fe(2+) serves as cofactor.

The protein localises to the cytoplasm. It catalyses the reaction L-threonylcarbamoyladenylate + adenosine(37) in tRNA = N(6)-L-threonylcarbamoyladenosine(37) in tRNA + AMP + H(+). In terms of biological role, required for the formation of a threonylcarbamoyl group on adenosine at position 37 (t(6)A37) in tRNAs that read codons beginning with adenine. Is involved in the transfer of the threonylcarbamoyl moiety of threonylcarbamoyl-AMP (TC-AMP) to the N6 group of A37, together with TsaE and TsaB. TsaD likely plays a direct catalytic role in this reaction. The polypeptide is tRNA N6-adenosine threonylcarbamoyltransferase (Lacticaseibacillus casei (strain BL23) (Lactobacillus casei)).